We begin with the raw amino-acid sequence, 126 residues long: Large ribosomal subunit protein uL22 (126 aa).

Belongs to the universal ribosomal protein uL22 family. In terms of assembly, part of the 50S ribosomal subunit.

Its function is as follows. This protein binds specifically to 23S rRNA; its binding is stimulated by other ribosomal proteins, e.g. L4, L17, and L20. It is important during the early stages of 50S assembly. It makes multiple contacts with different domains of the 23S rRNA in the assembled 50S subunit and ribosome. Functionally, the globular domain of the protein is located near the polypeptide exit tunnel on the outside of the subunit, while an extended beta-hairpin is found that lines the wall of the exit tunnel in the center of the 70S ribosome. This is Large ribosomal subunit protein uL22 from Maricaulis maris (strain MCS10) (Caulobacter maris).